The chain runs to 572 residues: Proline--tRNA ligase (572 aa).

Belongs to the class-II aminoacyl-tRNA synthetase family. ProS type 1 subfamily. As to quaternary structure, homodimer.

It is found in the cytoplasm. The enzyme catalyses tRNA(Pro) + L-proline + ATP = L-prolyl-tRNA(Pro) + AMP + diphosphate. In terms of biological role, catalyzes the attachment of proline to tRNA(Pro) in a two-step reaction: proline is first activated by ATP to form Pro-AMP and then transferred to the acceptor end of tRNA(Pro). As ProRS can inadvertently accommodate and process non-cognate amino acids such as alanine and cysteine, to avoid such errors it has two additional distinct editing activities against alanine. One activity is designated as 'pretransfer' editing and involves the tRNA(Pro)-independent hydrolysis of activated Ala-AMP. The other activity is designated 'posttransfer' editing and involves deacylation of mischarged Ala-tRNA(Pro). The misacylated Cys-tRNA(Pro) is not edited by ProRS. The protein is Proline--tRNA ligase of Escherichia coli (strain K12 / MC4100 / BW2952).